Here is a 733-residue protein sequence, read N- to C-terminus: 1,4-alpha-glucan branching enzyme GlgB (733 aa).

Catalysis depends on D412, which acts as the Nucleophile. Residue E467 is the Proton donor of the active site.

Belongs to the glycosyl hydrolase 13 family. GlgB subfamily. In terms of assembly, monomer.

The catalysed reaction is Transfers a segment of a (1-&gt;4)-alpha-D-glucan chain to a primary hydroxy group in a similar glucan chain.. It participates in glycan biosynthesis; glycogen biosynthesis. Catalyzes the formation of the alpha-1,6-glucosidic linkages in glycogen by scission of a 1,4-alpha-linked oligosaccharide from growing alpha-1,4-glucan chains and the subsequent attachment of the oligosaccharide to the alpha-1,6 position. The polypeptide is 1,4-alpha-glucan branching enzyme GlgB (Burkholderia vietnamiensis (strain G4 / LMG 22486) (Burkholderia cepacia (strain R1808))).